Reading from the N-terminus, the 370-residue chain is Death-associated protein kinase 2 (370 aa).

The 263-residue stretch at 23 to 285 folds into the Protein kinase domain; sequence YDIGEELGSG…IQEALRHPWI (263 aa). ATP contacts are provided by residues 29 to 37 and Lys-52; that span reads LGSGQFAIV. Catalysis depends on Asp-149, which acts as the Proton acceptor. Residues 277–344 form a calmodulin-binding region; it reads QEALRHPWIT…KVHLRPDEDL (68 aa). Residues 292–301 form an autoinhibitory domain region; sequence QAMVRRESVV. Ser-299 carries the phosphoserine modification. Position 318 is a phosphoserine; by autocatalysis (Ser-318). Residues 348-370 are disordered; the sequence is ESDTEEDIARRKALHPRRRSSTS. At Ser-349 the chain carries Phosphoserine. Residues 358 to 370 show a composition bias toward basic residues; sequence RKALHPRRRSSTS. At Thr-369 the chain carries Phosphothreonine; by PKB/AKT1.

This sequence belongs to the protein kinase superfamily. CAMK Ser/Thr protein kinase family. DAP kinase subfamily. Homodimer in its autoinhibited state. Active as monomer. Isoform 2 but not isoform 1 can interact with ATF4. Interacts with 14-3-3 proteins YWHAB, YWHAE, YWHAG, YWHAH, YWHAQ, YWHAZ and SFN; the interaction requires DAPK2 phosphorylation at Thr-369 and suppresses DAPK2 kinase activity and DAPK2-induced apoptosis. Mg(2+) is required as a cofactor. Autophosphorylation at Ser-318 inhibits its catalytic activity. Dephosphorylated at Ser-318 in response to activated Fas and TNF-alpha receptors. In terms of tissue distribution, expressed in neutrophils and eosinophils. Isoform 2 is expressed in embryonic stem cells (at protein level). Isoform 1 is ubiquitously expressed in all tissue types examined with high levels in heart, lung and skeletal muscle.

It localises to the cytoplasm. It is found in the cytoplasmic vesicle. Its subcellular location is the autophagosome lumen. The enzyme catalyses L-seryl-[protein] + ATP = O-phospho-L-seryl-[protein] + ADP + H(+). It catalyses the reaction L-threonyl-[protein] + ATP = O-phospho-L-threonyl-[protein] + ADP + H(+). With respect to regulation, activated by Ca(2+)/calmodulin. Regulated by a double locking mechanism, involving autophosphorylation at Ser-318, calmodulin binding, and dimerization. In the inactive state, Ser-318 is phosphorylated, and the kinase is dimeric. Activation involves: dephosphorylation at Ser-318, release-of-autoinhibition mechanism where calmodulin binding induces a conformational change that relieves the steric block of the active site by the autoinhibitory domain, and generation of the monomeric active form of the kinase. Its function is as follows. Calcium/calmodulin-dependent serine/threonine kinase involved in multiple cellular signaling pathways that trigger cell survival, apoptosis, and autophagy. Regulates both type I apoptotic and type II autophagic cell death signals, depending on the cellular setting. The former is caspase-dependent, while the latter is caspase-independent and is characterized by the accumulation of autophagic vesicles. Acts as a mediator of anoikis and a suppressor of beta-catenin-dependent anchorage-independent growth of malignant epithelial cells. May play a role in granulocytic maturation. Regulates granulocytic motility by controlling cell spreading and polarization. Functionally, isoform 2 is not regulated by calmodulin. It can phosphorylate MYL9. It can induce membrane blebbing and autophagic cell death. The sequence is that of Death-associated protein kinase 2 (DAPK2) from Homo sapiens (Human).